Here is a 260-residue protein sequence, read N- to C-terminus: Putative protein phosphatase (260 aa).

One can recognise a PPM-type phosphatase domain in the interval 9 to 254 (FTGLSKKGPV…DNITAALVNL (246 aa)).

It catalyses the reaction O-phospho-L-seryl-[protein] + H2O = L-seryl-[protein] + phosphate. It carries out the reaction O-phospho-L-threonyl-[protein] + H2O = L-threonyl-[protein] + phosphate. In Mycoplasma genitalium (strain ATCC 33530 / DSM 19775 / NCTC 10195 / G37) (Mycoplasmoides genitalium), this protein is Putative protein phosphatase.